We begin with the raw amino-acid sequence, 139 residues long: Nucleoside diphosphate kinase (139 aa).

Residues K11, F59, R87, T93, R104, and N114 each coordinate ATP. H117 (pros-phosphohistidine intermediate) is an active-site residue.

Belongs to the NDK family. Homotetramer. It depends on Mg(2+) as a cofactor.

Its subcellular location is the cytoplasm. It catalyses the reaction a 2'-deoxyribonucleoside 5'-diphosphate + ATP = a 2'-deoxyribonucleoside 5'-triphosphate + ADP. The enzyme catalyses a ribonucleoside 5'-diphosphate + ATP = a ribonucleoside 5'-triphosphate + ADP. Its function is as follows. Major role in the synthesis of nucleoside triphosphates other than ATP. The ATP gamma phosphate is transferred to the NDP beta phosphate via a ping-pong mechanism, using a phosphorylated active-site intermediate. The sequence is that of Nucleoside diphosphate kinase from Moorella thermoacetica (strain ATCC 39073 / JCM 9320).